We begin with the raw amino-acid sequence, 131 residues long: Large ribosomal subunit protein uL18 (131 aa).

This sequence belongs to the universal ribosomal protein uL18 family. Part of the 50S ribosomal subunit; part of the 5S rRNA/L5/L18/L25 subcomplex. Contacts the 5S and 23S rRNAs.

Functionally, this is one of the proteins that bind and probably mediate the attachment of the 5S RNA into the large ribosomal subunit, where it forms part of the central protuberance. This is Large ribosomal subunit protein uL18 from Corynebacterium kroppenstedtii (strain DSM 44385 / JCM 11950 / CIP 105744 / CCUG 35717).